Reading from the N-terminus, the 402-residue chain is CinA-like protein (402 aa).

Belongs to the CinA family.

This is CinA-like protein from Deinococcus deserti (strain DSM 17065 / CIP 109153 / LMG 22923 / VCD115).